The primary structure comprises 1785 residues: Plexin-2 (1785 aa).

The N-terminal stretch at 1–17 (MLPESVFLLLISHFLRA) is a signal peptide. In terms of domain architecture, Sema spans 18–444 (VTQPPFETEG…MPYGIILEEL (427 aa)). Residues 18–1139 (VTQPPFETEG…SDHALPSRLS (1122 aa)) are Extracellular-facing. The N-linked (GlcNAc...) asparagine glycan is linked to asparagine 66. Disulfide bonds link cysteine 84–cysteine 91, cysteine 118–cysteine 126, cysteine 247–cysteine 349, cysteine 263–cysteine 300, cysteine 318–cysteine 336, cysteine 447–cysteine 464, cysteine 453–cysteine 487, cysteine 456–cysteine 473, and cysteine 467–cysteine 479. N-linked (GlcNAc...) asparagine glycosylation occurs at asparagine 249. Residues 446–488 (TCSHHSSCTECLVSVDPLCQWCHPTQSCTTSARCTSPVTSQCP) enclose the PSI 1 domain. N-linked (GlcNAc...) asparagine glycans are attached at residues asparagine 502, asparagine 536, and asparagine 572. Cysteine 524 and cysteine 544 form a disulfide bridge. Positions 577–617 (DCSGYGTCSSCMSSEYNCAWCSGLHKCSNSCGALEKSKACV) constitute a PSI 2 domain. N-linked (GlcNAc...) asparagine glycans are attached at residues asparagine 679 and asparagine 702. The PSI 3 domain occupies 707-748 (SCTNLASDCSSCLALSPSLSCGWCNRQCSHECHESKATAVCD). IPT/TIG domains follow at residues 750-837 (PRID…LYSF), 840-924 (TSIF…PFEY), and 928-1040 (PSIS…LSPF). N-linked (GlcNAc...) asparagine glycans are attached at residues asparagine 864, asparagine 886, asparagine 984, and asparagine 1016. A helical transmembrane segment spans residues 1140–1160 (LLILGLLLFIVVTLTVMCLVF). A coiled-coil region spans residues 1159–1197 (VFKRRRQEREKEYRKIQLQMENLENNVRKECKQAFAELQ). At 1161-1785 (KRRRQEREKE…HIYSTISDYE (625 aa)) the chain is on the cytoplasmic side.

It belongs to the plexin family. As to quaternary structure, interacts with mab-20. Expressed predominantly in the central nervous system from embryonic to adult stages. Expressed in early embryos in ventral neuroblasts. Expressed in neurons and in a subset of posterior lateral and ventral epidermal cells following epidermal enclosure. Present in neurons, muscles and weakly expressed in epidermal cells of the larval tail.

It is found in the cell membrane. In terms of biological role, involved as a receptor for mab-20/sema-2a in the formation or stabilization of cell-cell contacts at several stages of epithelial morphogenesis. In early embryonic development, required for proper ventral closure of the epidermis. During male tail morphogenesis, involved in precursor cell sorting and in the formation of distinct sensory rays. Involved in axon guidance of SDQL neurons during neurogenesis. Probably in response to stimulation by mab-20, regulates fln-1-mediated remodeling of the actin cytoskeleton and thus axon guidance and/or fasciculation of DD/VD neurons. The chain is Plexin-2 from Caenorhabditis elegans.